The following is a 179-amino-acid chain: Cytoglobin-2 (179 aa).

Acidic residues predominate over residues 1–11 (MEKEREDEETE). A disordered region spans residues 1-20 (MEKEREDEETEGRERPEPLT). A Globin domain is found at 18–167 (PLTDVERGII…LYWHITGAYT (150 aa)). The heme b site is built by His81 and His113.

The protein belongs to the globin family. In terms of assembly, monomeric. As to expression, expressed in all tissues examined, with highest levels in brain and eye, and considerably lower levels in skin, gut, heart, gill, liver and muscle.

The protein localises to the cytoplasm. The protein resides in the nucleus. The enzyme catalyses Fe(II)-heme b-[protein] + nitric oxide + O2 = Fe(III)-heme b-[protein] + nitrate. It carries out the reaction Fe(III)-heme b-[protein] + nitric oxide + H2O = Fe(II)-heme b-[protein] + nitrite + 2 H(+). The catalysed reaction is 2 superoxide + 2 H(+) = H2O2 + O2. It catalyses the reaction H2O2 + AH2 = A + 2 H2O. In terms of biological role, probable multifunctional globin with a hexacoordinated heme iron required for the catalysis of various reactions depending on redox condition of the cell as well as oxygen availability. Has a nitric oxide dioxygenase (NOD) activity and is most probably involved in cell-mediated and oxygen-dependent nitric oxide consumption. Under normoxic conditions functions as a nitric oxide dioxygenase (NOD) but under hypoxic conditions the globin may switch its function to that of a nitrite (NO2) reductase (NiR), generating nitric oxide. Could also have peroxidase and superoxide dismutase activities, detoxifying reactive oxygen species and protecting cells against oxidative stress. Also binds dioxygen with low affinity and could function as an oxygen sensor but has probably no function as a respiratory oxygen carrier. The chain is Cytoglobin-2 from Danio rerio (Zebrafish).